A 621-amino-acid polypeptide reads, in one-letter code: Autonomous transposable element EN-1 mosaic protein (621 aa).

Disordered stretches follow at residues 1–119, 428–447, 498–530, and 549–621; these read MFRM…PPRR, YTRR…PSAR, QQPP…TSVQ, and RQPG…PPTE. Polar residues-rich tracts occupy residues 27–39 and 47–61; these read EGTT…QEQL and RGSS…TTSR. Positions 82 to 102 are enriched in acidic residues; that stretch reads AAVDAEAEEAAAELDDGEETS. The segment covering 570 to 594 has biased composition (low complexity); the sequence is PPRGQSQSPGLPSHSPGSGSGSHHA.

In terms of biological role, this protein has most probably three functions; the mutator (M) function, for excision and transposition; the suppressor (S) function, which inhibits residual gene activity of certain alleles in which inhibitor elements are integrated; an activator (A) function is proposed, because inactive SPM can be activated by a second SPM. The polypeptide is Autonomous transposable element EN-1 mosaic protein (Zea mays (Maize)).